The sequence spans 381 residues: MQGAVAGLVFLAVLVIFAIIVVAKSVALIPQAEAAVIERLGRYSRTVSGQLTLLVPFIDRVRARVDLRERVVSFPPQPVITEDNLTLNIDTVVYFQVTVPQAAVYEISNYIVGVEQLTTTTLRNVVGGMTLEQTLTSRDQINAQLRGVLDEATGRWGLRVARVELRSIDPPPSIQASMEKQMKADREKRAMILTAEGTREAAIKQAEGQKQAQILAAEGAKQAAILAAEADRQSRMLRAQGERAAAYLQAQGQAKAIEKTFAAIKAGRPTPEMLAYQYLQTLPEMARGDANKVWVVPSDFNAALQGFTRLLGKPGEDGVFRFEPSPVEDQPKHAADGDDAEVAGWFSTDTDPSIARAVATAEAIARKPVEGSLGTPPRLTQ.

A helical membrane pass occupies residues 3–23; it reads GAVAGLVFLAVLVIFAIIVVA.

It belongs to the band 7/mec-2 family.

It is found in the membrane. This is an uncharacterized protein from Mycobacterium bovis (strain ATCC BAA-935 / AF2122/97).